Reading from the N-terminus, the 878-residue chain is DNA mismatch repair protein MutS (878 aa).

630–637 (GPNMAGKS) is an ATP binding site.

The protein belongs to the DNA mismatch repair MutS family.

Its function is as follows. This protein is involved in the repair of mismatches in DNA. It is possible that it carries out the mismatch recognition step. This protein has a weak ATPase activity. The chain is DNA mismatch repair protein MutS from Chlorobaculum tepidum (strain ATCC 49652 / DSM 12025 / NBRC 103806 / TLS) (Chlorobium tepidum).